We begin with the raw amino-acid sequence, 329 residues long: Ankyrin repeat and SOCS box protein 5 (329 aa).

ANK repeat units lie at residues 69-98 (ADRSPLHEAASQGRLLALRTLLSQGYNVNA), 102-131 (DHVTPLHEACLGDHVACARTLLEAGANVNA), 135-164 (DGVTPLFNACSQGSPSCAELLLEYGAKAQL), 167-196 (CLPSPTHEAASKGHHECLDILISWGIDVDQ), 200-229 (HLGTPLYVACMSQQFHCIWKLLYAGADVQK), and 232-261 (YWDTPLHAAAQQSSTEIVNLLLEFGADINA). In terms of domain architecture, SOCS box spans 278–329 (MVERILLQHEATPSSLYQLCRLCIRSYIGKPRLHLIPQLQLPTLLKNFLQYR).

This sequence belongs to the ankyrin SOCS box (ASB) family.

Its pathway is protein modification; protein ubiquitination. In terms of biological role, may be a substrate-recognition component of a SCF-like ECS (Elongin-Cullin-SOCS-box protein) E3 ubiquitin-protein ligase complex which mediates the ubiquitination and subsequent proteasomal degradation of target proteins. May play a role in the initiation of arteriogenesis. This is Ankyrin repeat and SOCS box protein 5 (ASB5) from Homo sapiens (Human).